The primary structure comprises 173 residues: Ribosome maturation factor RimM (173 aa).

Positions 95–169 (DPDEFYDHQL…VIEIDPPEGL (75 aa)) constitute a PRC barrel domain.

The protein belongs to the RimM family. As to quaternary structure, binds ribosomal protein uS19.

It is found in the cytoplasm. Functionally, an accessory protein needed during the final step in the assembly of 30S ribosomal subunit, possibly for assembly of the head region. Essential for efficient processing of 16S rRNA. May be needed both before and after RbfA during the maturation of 16S rRNA. It has affinity for free ribosomal 30S subunits but not for 70S ribosomes. The chain is Ribosome maturation factor RimM from Mycobacteroides abscessus (strain ATCC 19977 / DSM 44196 / CCUG 20993 / CIP 104536 / JCM 13569 / NCTC 13031 / TMC 1543 / L948) (Mycobacterium abscessus).